The sequence spans 156 residues: Transcription antitermination protein NusB (156 aa).

The protein belongs to the NusB family.

Functionally, involved in transcription antitermination. Required for transcription of ribosomal RNA (rRNA) genes. Binds specifically to the boxA antiterminator sequence of the ribosomal RNA (rrn) operons. This Vibrio cholerae serotype O1 (strain ATCC 39541 / Classical Ogawa 395 / O395) protein is Transcription antitermination protein NusB.